Consider the following 93-residue polypeptide: Large ribosomal subunit protein uL23 (93 aa).

It belongs to the universal ribosomal protein uL23 family. In terms of assembly, part of the 50S ribosomal subunit. Contacts protein L29, and trigger factor when it is bound to the ribosome.

Its function is as follows. One of the early assembly proteins it binds 23S rRNA. One of the proteins that surrounds the polypeptide exit tunnel on the outside of the ribosome. Forms the main docking site for trigger factor binding to the ribosome. This chain is Large ribosomal subunit protein uL23, found in Campylobacter lari (strain RM2100 / D67 / ATCC BAA-1060).